A 431-amino-acid polypeptide reads, in one-letter code: Glucose-6-phosphate isomerase (431 aa).

Glu-284 serves as the catalytic Proton donor. Active-site residues include His-305 and Lys-420.

It belongs to the GPI family.

The protein localises to the cytoplasm. The enzyme catalyses alpha-D-glucose 6-phosphate = beta-D-fructose 6-phosphate. It participates in carbohydrate biosynthesis; gluconeogenesis. It functions in the pathway carbohydrate degradation; glycolysis; D-glyceraldehyde 3-phosphate and glycerone phosphate from D-glucose: step 2/4. Catalyzes the reversible isomerization of glucose-6-phosphate to fructose-6-phosphate. The protein is Glucose-6-phosphate isomerase of Mycoplasma genitalium (strain ATCC 33530 / DSM 19775 / NCTC 10195 / G37) (Mycoplasmoides genitalium).